Consider the following 806-residue polypeptide: Leucine--tRNA ligase (806 aa).

Residues 38–48 (PYPSGEIHMGH) carry the 'HIGH' region motif. A 'KMSKS' region motif is present at residues 572–576 (KMSKS). Lys575 is a binding site for ATP.

This sequence belongs to the class-I aminoacyl-tRNA synthetase family.

The protein resides in the cytoplasm. It carries out the reaction tRNA(Leu) + L-leucine + ATP = L-leucyl-tRNA(Leu) + AMP + diphosphate. The protein is Leucine--tRNA ligase of Helicobacter pylori (strain HPAG1).